The chain runs to 552 residues: E3 ubiquitin-protein ligase MGRN1 (552 aa).

Residue Gly-2 is the site of N-myristoyl glycine attachment. The RING-type zinc finger occupies 278–317 (CVVCLSDLRDTLILPCRHLCLCTSCADTLRYQANNCPICR). Residues 355-384 (SCPFKKSKPHPASLASKKPKRETNSDSVPP) form a disordered region. Positions 406–409 (PSAP) match the Required for TSG101-binding motif. At Tyr-411 the chain carries Phosphotyrosine. A disordered region spans residues 439–552 (SSRQKGRPQS…PDSCSVGIDE (114 aa)). Residues 450 to 460 (APDSTLRSPSS) are compositionally biased toward polar residues. The segment covering 464–475 (EEDEEKLSEDVD) has biased composition (acidic residues). Ser-471 is subject to Phosphoserine. A compositionally biased stretch (polar residues) spans 504 to 523 (SSSPQQGTRAASIENVLQDS). Ser-524 is subject to Phosphoserine.

Interacts with MC1R and MC4R, but not with TBXA2R. Interacts with TSG101. Interacts with mislocalized cytosolically exposed PRNP; this interaction alters MGRN1 subcellular location and causes lysosomal enlargement. Post-translationally, autoubiquitinated in vitro.

The protein resides in the early endosome. Its subcellular location is the cytoplasm. It localises to the cytosol. The protein localises to the nucleus. It is found in the cell membrane. It catalyses the reaction S-ubiquitinyl-[E2 ubiquitin-conjugating enzyme]-L-cysteine + [acceptor protein]-L-lysine = [E2 ubiquitin-conjugating enzyme]-L-cysteine + N(6)-ubiquitinyl-[acceptor protein]-L-lysine.. Its pathway is protein modification; protein ubiquitination. Its function is as follows. E3 ubiquitin-protein ligase. Mediates monoubiquitination at multiple sites of TSG101 in the presence of UBE2D1, but not of UBE2G1, nor UBE2H. Plays a role in the regulation of endosome-to-lysosome trafficking. Impairs MC1R- and MC4R-signaling by competing with GNAS-binding to MCRs and inhibiting agonist-induced cAMP production. Does not inhibit ADRB2-signaling. Does not promote MC1R ubiquitination. Acts also as a negative regulator of hedgehog signaling. The protein is E3 ubiquitin-protein ligase MGRN1 (MGRN1) of Homo sapiens (Human).